Reading from the N-terminus, the 204-residue chain is MVGHLHLQAMGDTREQSRDGLLDSPDSGLPPSPSPSPPFYALSPGTLDTRTTTEAPAAPSLFQTPPALEMRSRLLPVFFGESIEVDPEPAHEIRCNSEITYASERYFRDKIFYAPVPTVTAYSETIVAAPNCTWRSYRSQLTLEPRPRALRFGSTAIIFPKLARSSFRTTLHCSLGQPRHWYSSSLQLRRCGDPTPGPSCPDVL.

The segment at 1–52 is disordered; it reads MVGHLHLQAMGDTREQSRDGLLDSPDSGLPPSPSPSPPFYALSPGTLDTRTT. Basic and acidic residues predominate over residues 12–21; that stretch reads DTREQSRDGL. The span at 28-38 shows a compositional bias: pro residues; the sequence is GLPPSPSPSPP. Arg-151 bears the Asymmetric dimethylarginine mark.

It belongs to the Refilin family. In terms of assembly, interacts with FLNA and FLNB. Detected in various tissues, with highest expression in lung, followed by spleen.

The protein localises to the cytoplasm. It is found in the cytoskeleton. In terms of biological role, involved in the regulation of the perinuclear actin network and nuclear shape through interaction with filamins. Plays an essential role in the formation of cartilaginous skeletal elements. The protein is Refilin-A (Rflna) of Mus musculus (Mouse).